The primary structure comprises 408 residues: Arylacetamide deacetylase-like 3 (408 aa).

3 helical membrane passes run V2–L22, I46–L66, and S109–L129. The Involved in the stabilization of the negatively charged intermediate by the formation of the oxyanion hole signature appears at H120–G122. S194 is a catalytic residue. N321 carries an N-linked (GlcNAc...) asparagine glycan. Active-site residues include D348 and H378.

The protein belongs to the 'GDXG' lipolytic enzyme family.

The protein localises to the membrane. The polypeptide is Arylacetamide deacetylase-like 3 (Aadacl3) (Mus musculus (Mouse)).